Here is an 879-residue protein sequence, read N- to C-terminus: MKNMGLNEIREAYLNFFEGKGHLRMESFSLVPKNDKSLLLINAGMAPLKPYFTGVQTPPKSRVTTCQKCIRTGDIENVGKTSRHGTFFEMLGNFSFGDYFKCEVIPWAWEFVTKSLNIPKDKLYVTIYLDDDEAYDIWTKSTDIDPSRIFRLGKEDNFWEIGQGPCGPCSEIHYQREGEKINSVEEFIKKSDDDEVIEFWNLVFTQFDKDENENYNRLAHPNIDTGMGLERMATIMQGVNSIFEVDTIKAVLDEISEIANIKYGENKEKDISLRVITDHVRSVTFMISDGILPSNEGRGYVLRRLLRRASRHGKLLGIKGNFLYKVCKVVIENSHKAYKELKEKEEYIKKIIKLEEERFAETIDGGIQILNEYVDELINKGEKVLPGDKAFKLYDTYGFPIELTKEILEEKSIDIDEGGFTKEMEAQKQRARAAREETNYMGSEDTIINKLPIELQTEFLGYSELSVEAKIIAIIKGEELVEELKQGDKGIIIVDKTPFYSEKGGQIGDTGILAGKNVKVKIQDCRNNISGKILHFVEILEGSIKLQDTVNLTVDRLRRDAIRKNHSATHLLHEALKKIVGAHIEQAGSFVDEHRLRFDFNHFSSLTKEELKNVEKLVNKKIMEVIPVNTKVMNIEEAKESGAVALFDEKYDEKVRVVSLGDFSKELCGGTHVSNSGEIGLFKIISETGVAAGVRRIEGVTGFNALKYIEEKEALLEGLCEVLKCSNKDIINKATSQIEEIKNKEKEINNLKSKLASGSQEDILKNIKEVKGIKLVSGVLKDIDGGALRDLADKLRDKIQEGLVVLASVGEGKIQFVAMATKEAVAKGAHCGKIIKEVASIAGGGGGGRPDMAQAGGKNPEKAEEAIAKVEDILSSLVK.

Residues H566, H570, C668, and H672 each coordinate Zn(2+).

Belongs to the class-II aminoacyl-tRNA synthetase family. Zn(2+) serves as cofactor.

The protein resides in the cytoplasm. It carries out the reaction tRNA(Ala) + L-alanine + ATP = L-alanyl-tRNA(Ala) + AMP + diphosphate. Its function is as follows. Catalyzes the attachment of alanine to tRNA(Ala) in a two-step reaction: alanine is first activated by ATP to form Ala-AMP and then transferred to the acceptor end of tRNA(Ala). Also edits incorrectly charged Ser-tRNA(Ala) and Gly-tRNA(Ala) via its editing domain. This chain is Alanine--tRNA ligase, found in Clostridium tetani (strain Massachusetts / E88).